The sequence spans 159 residues: Ribosomal RNA large subunit methyltransferase H (159 aa).

S-adenosyl-L-methionine-binding positions include Leu76, Gly108, and 127-132 (FGRLTL).

It belongs to the RNA methyltransferase RlmH family. In terms of assembly, homodimer.

The protein localises to the cytoplasm. The catalysed reaction is pseudouridine(1915) in 23S rRNA + S-adenosyl-L-methionine = N(3)-methylpseudouridine(1915) in 23S rRNA + S-adenosyl-L-homocysteine + H(+). In terms of biological role, specifically methylates the pseudouridine at position 1915 (m3Psi1915) in 23S rRNA. The sequence is that of Ribosomal RNA large subunit methyltransferase H from Streptococcus pneumoniae (strain 70585).